The following is a 162-amino-acid chain: Interleukin-15 (162 aa).

The first 29 residues, 1–29, serve as a signal peptide directing secretion; the sequence is MRILKPYLRSTSIQCYLCLLLNSHFLTEA. Residues 30–48 constitute a propeptide that is removed on maturation; the sequence is GIHVFILGCISAGLPKTEA. Intrachain disulfides connect cysteine 83-cysteine 133 and cysteine 90-cysteine 136. Residues asparagine 113, asparagine 121, and asparagine 127 are each glycosylated (N-linked (GlcNAc...) asparagine).

Belongs to the IL-15/IL-21 family.

The protein resides in the secreted. Cytokine that plays a major role in the development of inflammatory and protective immune responses to microbial invaders and parasites by modulating immune cells of both the innate and adaptive immune systems. Stimulates the proliferation of natural killer cells, T-cells and B-cells and promotes the secretion of several cytokines. In monocytes, induces the production of IL8 and monocyte chemotactic protein 1/CCL2, two chemokines that attract neutrophils and monocytes respectively to sites of infection. Unlike most cytokines, which are secreted in soluble form, IL15 is expressed in association with its high affinity IL15RA on the surface of IL15-producing cells and delivers signals to target cells that express IL2RB and IL2RG receptor subunits. Binding to its receptor triggers the phosphorylation of JAK1 and JAK3 and the recruitment and subsequent phosphorylation of signal transducer and activator of transcription-3/STAT3 and STAT5. In mast cells, induces the rapid tyrosine phosphorylation of STAT6 and thereby controls mast cell survival and release of cytokines such as IL4. The protein is Interleukin-15 (IL15) of Ovis aries (Sheep).